A 335-amino-acid chain; its full sequence is MTGGFCVPVLLAAWLAAAAAEGLEQAALPAEESRVQPMTASNWTLVMEGEWMLKFYAPWCPSCQQTDSEWETFAKNGETLQISVGKVDVIQEPGLSGRFFVTTLPAFFHAKDGIFRRYRGPGIYEDLQNYILEKKWQSVEPLTGWKSPASLTMSGMAGLFSISGKIWHLHNYFTVTLGIPAWCSYVFFVIATLVFGLFMGLILVVISECFCVPLPRASSERCEQEQSTGEAQGAEQLQDAEEEKDDSNEEENKDSLVDDEEEKEDIGDEDEGEEDEEEDNLAGIMAEERSDTNERAVVKEGSVSPKEDGAHPADTQDVVEDALRQRKSQNANKGS.

The first 20 residues, methionine 1 to alanine 20, serve as a signal peptide directing secretion. The region spanning alanine 26 to glutamate 133 is the Thioredoxin domain. Residues cysteine 60 and cysteine 63 each act as nucleophile in the active site. A disulfide bridge connects residues cysteine 60 and cysteine 63. The helical transmembrane segment at valine 186–isoleucine 206 threads the bilayer. The tract at residues cysteine 222–glutamine 316 is disordered. Residues glutamine 238 to asparagine 280 show a composition bias toward acidic residues. Phosphoserine occurs at positions 247 and 255. The segment covering alanine 286 to valine 298 has biased composition (basic and acidic residues).

It is found in the nucleus inner membrane. The protein resides in the endoplasmic reticulum membrane. This Mus musculus (Mouse) protein is Thioredoxin-related transmembrane protein 4 (Tmx4).